The chain runs to 189 residues: Crossover junction endodeoxyribonuclease RuvC (189 aa).

Active-site residues include Asp11, Glu71, and Asp143. Mg(2+) contacts are provided by Asp11, Glu71, and Asp143.

It belongs to the RuvC family. As to quaternary structure, homodimer which binds Holliday junction (HJ) DNA. The HJ becomes 2-fold symmetrical on binding to RuvC with unstacked arms; it has a different conformation from HJ DNA in complex with RuvA. In the full resolvosome a probable DNA-RuvA(4)-RuvB(12)-RuvC(2) complex forms which resolves the HJ. Mg(2+) is required as a cofactor.

The protein resides in the cytoplasm. It catalyses the reaction Endonucleolytic cleavage at a junction such as a reciprocal single-stranded crossover between two homologous DNA duplexes (Holliday junction).. The RuvA-RuvB-RuvC complex processes Holliday junction (HJ) DNA during genetic recombination and DNA repair. Endonuclease that resolves HJ intermediates. Cleaves cruciform DNA by making single-stranded nicks across the HJ at symmetrical positions within the homologous arms, yielding a 5'-phosphate and a 3'-hydroxyl group; requires a central core of homology in the junction. The consensus cleavage sequence is 5'-(A/T)TT(C/G)-3'. Cleavage occurs on the 3'-side of the TT dinucleotide at the point of strand exchange. HJ branch migration catalyzed by RuvA-RuvB allows RuvC to scan DNA until it finds its consensus sequence, where it cleaves and resolves the cruciform DNA. This chain is Crossover junction endodeoxyribonuclease RuvC, found in Methylorubrum extorquens (strain CM4 / NCIMB 13688) (Methylobacterium extorquens).